We begin with the raw amino-acid sequence, 412 residues long: Putative competence-damage inducible protein (412 aa).

The protein belongs to the CinA family.

The protein is Putative competence-damage inducible protein of Caldanaerobacter subterraneus subsp. tengcongensis (strain DSM 15242 / JCM 11007 / NBRC 100824 / MB4) (Thermoanaerobacter tengcongensis).